The chain runs to 200 residues: Small ribosomal subunit protein uS4 (200 aa).

The segment at 22–42 (TGKELEKRPYAPGPHGPNQRK) is disordered. The S4 RNA-binding domain occupies 92–152 (ARLDNLVYRM…EKSNSLVVVK (61 aa)).

The protein belongs to the universal ribosomal protein uS4 family. Part of the 30S ribosomal subunit. Contacts protein S5. The interaction surface between S4 and S5 is involved in control of translational fidelity.

Functionally, one of the primary rRNA binding proteins, it binds directly to 16S rRNA where it nucleates assembly of the body of the 30S subunit. Its function is as follows. With S5 and S12 plays an important role in translational accuracy. The sequence is that of Small ribosomal subunit protein uS4 from Bacillus mycoides (strain KBAB4) (Bacillus weihenstephanensis).